The chain runs to 100 residues: Large ribosomal subunit protein uL23 (100 aa).

Belongs to the universal ribosomal protein uL23 family. In terms of assembly, part of the 50S ribosomal subunit. Contacts protein L29, and trigger factor when it is bound to the ribosome.

Its function is as follows. One of the early assembly proteins it binds 23S rRNA. One of the proteins that surrounds the polypeptide exit tunnel on the outside of the ribosome. Forms the main docking site for trigger factor binding to the ribosome. The sequence is that of Large ribosomal subunit protein uL23 from Mycobacterium ulcerans (strain Agy99).